We begin with the raw amino-acid sequence, 1358 residues long: Phosphoinositide 3-kinase regulatory subunit 4 (1358 aa).

Glycine 2 is lipidated: N-myristoyl glycine. Residues 26 to 324 (FEYDKSLGST…AFPEVFYTFL (299 aa)) form the Protein kinase domain. Residues 32–40 (LGSTRFFKV) and lysine 53 contribute to the ATP site. The active-site Proton acceptor is the aspartate 148. HEAT repeat units lie at residues 413-450 (ILLD…LVQE), 458-495 (IYPE…TALR), 572-610 (KAND…YVGW), and 612-648 (SSSI…LGLL). Residues serine 808, serine 813, serine 853, and serine 865 each carry the phosphoserine modification. Residues 875–899 (LPKTSDHEVVPTGKSPRSESSAGVC) form a disordered region. WD repeat units follow at residues 991–1030 (EHKS…GKTT), 1040–1079 (RIGG…LPKS), 1093–1134 (KEDG…NAWT), 1139–1178 (LKSG…PISS), 1182–1223 (PSRA…RRLT), and 1237–1278 (PSPH…RSYV). Residues 1307-1326 (KQKVGPSDDTPRRGPESLPV) form a disordered region. Residues 1315–1326 (DTPRRGPESLPV) are compositionally biased toward basic and acidic residues. Threonine 1316 bears the Phosphothreonine mark. A WD 7 repeat occupies 1327–1358 (GHHDIITDIATFQTTQGFIVTASRDGIVKVWK).

It belongs to the protein kinase superfamily. Ser/Thr protein kinase family. Component of the PI3K (PI3KC3/PI3K-III/class III phosphatidylinositol 3-kinase) complex the core of which is composed of the catalytic subunit PIK3C3, the regulatory subunit PIK3R4 and BECN1 associating with additional regulatory/auxiliary subunits to form alternative complex forms. Alternative complex forms containing a fourth regulatory subunit in a mutually exclusive manner are PI3K complex I (PI3KC3-C1) containing ATG14, and PI3K complex II (PI3KC3-C2) containing UVRAG. PI3KC3-C1 displays a V-shaped architecture with PIK3R4 serving as a bridge between PIK3C3 and the ATG14:BECN1 subcomplex. Both, PI3KC3-C1 and PI3KC3-C2, can associate with further regulatory subunits, such as RUBCN, SH3GLB1/Bif-1, AMBRA1 and NRBF2. PI3KC3-C1 probably associates with PIK3CB. Interacts with RAB7A in the presence of PIK3C3/VPS34. Interacts with NRBF2. Interacts with ARMC3. It depends on Mn(2+) as a cofactor. In terms of processing, myristoylated. Probably autophosphorylated.

Its subcellular location is the late endosome. It localises to the cytoplasmic vesicle. The protein resides in the autophagosome. The protein localises to the membrane. It carries out the reaction L-seryl-[protein] + ATP = O-phospho-L-seryl-[protein] + ADP + H(+). It catalyses the reaction L-threonyl-[protein] + ATP = O-phospho-L-threonyl-[protein] + ADP + H(+). In terms of biological role, regulatory subunit of the PI3K complex that mediates formation of phosphatidylinositol 3-phosphate; different complex forms are believed to play a role in multiple membrane trafficking pathways: PI3KC3-C1 is involved in initiation of autophagosomes and PI3KC3-C2 in maturation of autophagosomes and endocytosis. Involved in regulation of degradative endocytic trafficking and cytokinesis, probably in the context of PI3KC3-C2. The protein is Phosphoinositide 3-kinase regulatory subunit 4 (Pik3r4) of Rattus norvegicus (Rat).